The primary structure comprises 362 residues: MGAQKSIHAGRAKIDVNVDFTHKLCTSLMFPAFRDTSSPLSLVIGSLCIKHPNLFGGSEKLDVSWDKGLYDSNVLVAFRRPRPEWRPQQCFFIQHSLSPEIGVHGTPVDNFSRSGSGGVNLSKLALGLDLSEPASSKWSSTTSIKFEHVRPINDDGRAITRDLDGFPITCSGNTHDSMVVLKQESRFAKATDQGLSHFSMQIEQGIPVVSKWLIFNRFKFVASKGVRFGPAFLLASLTGGSIVGDMAPYQAFAIGGLGSVRGYGEGAVGSGRSCLVANTELALPLNKMTEGTIFLDCGTDLGSSRLVPGNPSMRQGKPGFGYGFGYGLRFKSPLGHLQVDYAINAFNQKTLYFGVTNLASST.

This sequence belongs to the OEP80 (TC 1.B.33.2) family. Expressed in germinating seeds. Expressed in the vasculature of roots, cotyledons and leaves.

The protein resides in the plastid. It localises to the chloroplast outer membrane. Its function is as follows. Beta-barrel pore-forming protein which possesses voltage-dependent channel activity. Required for proper plastid development. Involved in the maintenance of metabolic homeostasis of full-grown plants. This is Outer envelope protein 39, chloroplastic from Arabidopsis thaliana (Mouse-ear cress).